A 501-amino-acid chain; its full sequence is Dipeptide and tripeptide permease A (501 aa).

Over 1 to 21 the chain is Cytoplasmic; it reads MSTANKKPTESVSLNAFKQPK. Residues 22 to 44 form a helical membrane-spanning segment; the sequence is AFYLIFSIELWERFGYYGLQGIM. Residues 45–59 are Periplasmic-facing; it reads AVYLVKQLGMSEADS. Residues 60–80 form a helical membrane-spanning segment; sequence ITLFSSFSALVYGLVAIGGWL. At 81–89 the chain is on the cytoplasmic side; sequence GDKILGTKR. Residues 90-110 traverse the membrane as a helical segment; sequence VIMLGAVVLAIGYALVAWSGH. A topological domain (periplasmic) is located at residue aspartate 111. The chain crosses the membrane as a helical span at residues 112 to 132; it reads AGIVYMGMAAIAVGNGLFKAN. The Cytoplasmic segment spans residues 133 to 153; that stretch reads PSSLLSTCYAKDDPRLDGAFT. The helical transmembrane segment at 154–174 threads the bilayer; sequence MYYMSVNIGSFFSMLATPWLA. The Periplasmic segment spans residues 175-178; it reads ARYG. A helical membrane pass occupies residues 179–199; it reads WSTAFALSVVGMLITVVNFAF. Topologically, residues 200-219 are cytoplasmic; that stretch reads CQRWVKSYGSKPDFEPINFR. Residues 220–240 traverse the membrane as a helical segment; it reads NLLLTIVGIVVLIAVATWLLH. At 241–246 the chain is on the periplasmic side; sequence NQDIAR. The helical transmembrane segment at 247–267 threads the bilayer; sequence MVLGVIALGIVIIFGKEAFSM. Residues 268–274 are Cytoplasmic-facing; it reads HGAARRK. Residues 275–295 traverse the membrane as a helical segment; the sequence is MIVAFILMLQAIIFFVLYSQM. Residues 296–320 lie on the Periplasmic side of the membrane; it reads PTSLNFFAIRNVEHSILGIAFEPEQ. Residues 321 to 341 traverse the membrane as a helical segment; sequence YQALNPFWIITGSPILAAIYN. Residues 342-352 lie on the Cytoplasmic side of the membrane; the sequence is RMGDTLPMPMK. Residues 353–373 traverse the membrane as a helical segment; it reads FAIGMVLCSGAFLILPLGAKF. Over 374 to 383 the chain is Periplasmic; it reads ANDAGIVSVN. A helical transmembrane segment spans residues 384–404; it reads WLIASYGLQSIGELMISGLGL. Over 405 to 414 the chain is Cytoplasmic; it reads AMVAQLVPQR. A helical transmembrane segment spans residues 415–435; sequence LMGFIMGSWFLTTAGANIIGG. At 436 to 459 the chain is on the periplasmic side; that stretch reads YVANLMAVPSDVTDPLMSLEVYGR. The chain crosses the membrane as a helical span at residues 460–480; sequence VFMQIGIATAVIAVLMLLTAP. At 481–501 the chain is on the cytoplasmic side; the sequence is KLNRMTQDDDTAEKGSKAATV.

Belongs to the major facilitator superfamily. Proton-dependent oligopeptide transporter (POT/PTR) (TC 2.A.17) family. DtpA subfamily.

The protein localises to the cell inner membrane. Proton-dependent permease that transports di- and tripeptides. In Salmonella typhi, this protein is Dipeptide and tripeptide permease A.